The chain runs to 1819 residues: U3 small nucleolar RNA-associated protein 10 (1819 aa).

The stretch at 583 to 620 (LDFQAILPFLLVALADPSERIRREAAAALAAIGGIYKK) is one HEAT 1 repeat. A run of 2 helical transmembrane segments spans residues 945-965 (IQSG…AIVN) and 1001-1021 (ALLL…HSVM). HEAT repeat units lie at residues 1045 to 1082 (QTID…AFEH), 1269 to 1306 (LTLV…QNPE), 1313 to 1351 (IRVL…KYGK), and 1775 to 1812 (ALLP…VLGE).

Belongs to the HEATR1/UTP10 family. As to quaternary structure, component of the ribosomal small subunit (SSU) processome.

The protein localises to the nucleus. The protein resides in the nucleolus. Its subcellular location is the membrane. Involved in nucleolar processing of pre-18S ribosomal RNA. Involved in ribosome biosynthesis. This chain is U3 small nucleolar RNA-associated protein 10, found in Aspergillus clavatus (strain ATCC 1007 / CBS 513.65 / DSM 816 / NCTC 3887 / NRRL 1 / QM 1276 / 107).